Here is a 1738-residue protein sequence, read N- to C-terminus: MLKRKQSSRVEAQPVTDFGPDESLSDNADILWINKPWVHSLLRICAIISVISVCMNTPMTFEHYPPLQYVTFTLDTLLMFLYTAEMIAKMHIRGIVKGDSSYVKDRWCVFDGFMVFCLWVSLVLQVFEIADIVDQMSPWGMLRIPRPLIMIRAFRIYFRFELPRTRITNILKRSGEQIWSVSIFLLFFLLLYGILGVQMFGTFTYHCVVNDTKPGNVTWNSLAIPDTHCSPELEEGYQCPPGFKCMDLEDLGLSRQELGYSGFNEIGTSIFTVYEASSQEGWVFLMYRAIDSFPRWRSYFYFITLIFFLAWLVKNVFIAVIIETFAEIRVQFQQMWGTRSSTTSTATTQMFHEDAAGGWQLVAVDVNKPQGRAPACLQKMMRSSVFHMFILSMVTVDVIVAASNYYKGENFRRQYDEFYLAEVAFTVLFDLEALLKIWCLGFTGYISSSLHKFELLLVIGTTLHVYPDLYHSQFTYFQVLRVVRLIKISPALEDFVYKIFGPGKKLGSLVVFTASLLIVMSAISLQMFCFVEELDRFTTFPRAFMSMFQILTQEGWVDVMDQTLNAVGHMWAPLVAIYFILYHLFATLILLSLFVAVILDNLELDEDLKKLKQLKQSEANADTKEKLPLRLRIFEKFPNRPQMVKISKLPSDFTVPKIRESFMKQFIDRQQQDTCCLFRILPSTSSSSCDNPKKPTAEDNKYIDQKLRKSVFSIRARNLLEKETAVTKILRACTRQRMLSGSFEGQPAKERSILSVQHHIRQERRSLRHGSNSQRISRGKSLETLTQDHSNTVRYRNAQREDSEIKMIQEKKEQAEMKRKVQEEELRENHPYFDKPLFIVGREHRFRNFCRVVVRARFNASKTDPVTGAVKNTKYHQLYDLLGLVTYLDWVMITVTICSCISMMFESPFRRVMHAPTLQIAEYVFVIFMSIELNLKIMADGLFFTPTAVIRDFGGVMDIFIYLVSLIFLCWMPQNVPAESGAQLLMVLRCLRPLRIFKLVPQMRKVVRELFSGFKEIFLVSILLLTLMLVFASFGVQLFAGKLAKCNDPNIIRREDCNGIFRINVSVSKNLNLKLRPGEKKPGFWVPRVWANPRNFNFDNVGNAMLALFEVLSLKGWVEVRDVIIHRVGPIHGIYIHVFVFLGCMIGLTLFVGVVIANFNENKGTALLTVDQRRWEDLKSRLKIAQPLHLPPRPDNDGFRAKMYDITQHPFFKRTIALLVLAQSVLLSVKWDVDDPVTVPLATMSVVFTFIFVLEVTMKIIAMSPAGFWQSRRNRYDLLVTSLGVVWVVLHFALLNAYTYMMGACVIVFRFFSICGKHVTLKMLLLTVVVSMYKSFFIIVGMFLLLLCYAFAGVVLFGTVKYGENINRHANFSSAGKAITVLFRIVTGEDWNKIMHDCMVQPPFCTPDEFTYWATDCGNYAGALMYFCSFYVIIAYIMLNLLVAIIVENFSLFYSTEEDQLLSYNDLRHFQIIWNMVDDKREGVIPTFRVKFLLRLLRGRLEVDLDKDKLLFKHMCYEMERLHNGGDVTFHDVLSMLSYRSVDIRKSLQLEELLAREQLEYTIEEEVAKQTIRMWLKKCLKRIRAKQQQSCSIIHSLRESQEQERSRFLNPPSIETTQPSEDSNANSQDHSMQPETSSQQQLLSPTLSDRGGSRQDAADTGKPQRKIGQWRLPSAPKPISHSVSSVNLRFGGRTTMKTVVCKMNPMPDTASCGSEVKKWWTRQLTVESDESGDDLLDI.

Residues 1 to 36 (MLKRKQSSRVEAQPVTDFGPDESLSDNADILWINKP) lie on the Cytoplasmic side of the membrane. A helical membrane pass occupies residues 37 to 57 (WVHSLLRICAIISVISVCMNT). Over 58 to 65 (PMTFEHYP) the chain is Extracellular. A helical transmembrane segment spans residues 66-90 (PLQYVTFTLDTLLMFLYTAEMIAKM). Residues 91–106 (HIRGIVKGDSSYVKDR) lie on the Cytoplasmic side of the membrane. The helical transmembrane segment at 107-129 (WCVFDGFMVFCLWVSLVLQVFEI) threads the bilayer. At 130 to 137 (ADIVDQMS) the chain is on the extracellular side. Residues 138-158 (PWGMLRIPRPLIMIRAFRIYF) traverse the membrane as a helical; Voltage-sensor segment. Residues 159–173 (RFELPRTRITNILKR) lie on the Cytoplasmic side of the membrane. A helical transmembrane segment spans residues 174–199 (SGEQIWSVSIFLLFFLLLYGILGVQM). Over 200 to 269 (FGTFTYHCVV…YSGFNEIGTS (70 aa)) the chain is Extracellular. 2 disulfide bridges follow: Cys207/Cys239 and Cys229/Cys245. Asn210 and Asn216 each carry an N-linked (GlcNAc...) asparagine glycan. Positions 270–289 (IFTVYEASSQEGWVFLMYRA) form an intramembrane region, pore-forming. Residues 290-294 (IDSFP) lie on the Extracellular side of the membrane. The chain crosses the membrane as a helical span at residues 295–322 (RWRSYFYFITLIFFLAWLVKNVFIAVII). Topologically, residues 323–382 (ETFAEIRVQFQQMWGTRSSTTSTATTQMFHEDAAGGWQLVAVDVNKPQGRAPACLQKMMR) are cytoplasmic. The chain crosses the membrane as a helical span at residues 383-403 (SSVFHMFILSMVTVDVIVAAS). The Extracellular portion of the chain corresponds to 404 to 416 (NYYKGENFRRQYD). A helical transmembrane segment spans residues 417–439 (EFYLAEVAFTVLFDLEALLKIWC). Residues 440–447 (LGFTGYIS) lie on the Cytoplasmic side of the membrane. Residues 448–468 (SSLHKFELLLVIGTTLHVYPD) form a helical membrane-spanning segment. Over 469-472 (LYHS) the chain is Extracellular. A helical; Voltage-sensor transmembrane segment spans residues 473 to 492 (QFTYFQVLRVVRLIKISPAL). Topologically, residues 493-502 (EDFVYKIFGP) are cytoplasmic. Residues 503-530 (GKKLGSLVVFTASLLIVMSAISLQMFCF) form a helical membrane-spanning segment. At 531–543 (VEELDRFTTFPRA) the chain is on the extracellular side. Positions 544–563 (FMSMFQILTQEGWVDVMDQT) form an intramembrane region, pore-forming. The Extracellular segment spans residues 564–578 (LNAVGHMWAPLVAIY). Residues 579–599 (FILYHLFATLILLSLFVAVIL) traverse the membrane as a helical segment. The Cytoplasmic portion of the chain corresponds to 600–886 (DNLELDEDLK…QLYDLLGLVT (287 aa)). Positions 762 to 785 (QERRSLRHGSNSQRISRGKSLETL) are disordered. The stretch at 795–830 (YRNAQREDSEIKMIQEKKEQAEMKRKVQEEELRENH) forms a coiled coil. A helical transmembrane segment spans residues 887–906 (YLDWVMITVTICSCISMMFE). Residues 907 to 915 (SPFRRVMHA) are Extracellular-facing. A helical membrane pass occupies residues 916–939 (PTLQIAEYVFVIFMSIELNLKIMA). Over 940-947 (DGLFFTPT) the chain is Cytoplasmic. Residues 948–972 (AVIRDFGGVMDIFIYLVSLIFLCWM) traverse the membrane as a helical segment. Residues 973-980 (PQNVPAES) lie on the Extracellular side of the membrane. Residues 981-1003 (GAQLLMVLRCLRPLRIFKLVPQM) traverse the membrane as a helical; Voltage-sensor segment. Topologically, residues 1004–1015 (RKVVRELFSGFK) are cytoplasmic. Residues 1016–1039 (EIFLVSILLLTLMLVFASFGVQLF) traverse the membrane as a helical segment. Residues 1040 to 1104 (AGKLAKCNDP…NFNFDNVGNA (65 aa)) are Extracellular-facing. Cys1046 and Cys1057 are joined by a disulfide. N-linked (GlcNAc...) asparagine glycosylation occurs at Asn1064. An intramembrane region (pore-forming) is located at residues 1105–1124 (MLALFEVLSLKGWVEVRDVI). The Extracellular segment spans residues 1125 to 1129 (IHRVG). The helical transmembrane segment at 1130–1159 (PIHGIYIHVFVFLGCMIGLTLFVGVVIANF) threads the bilayer. At 1160 to 1210 (NENKGTALLTVDQRRWEDLKSRLKIAQPLHLPPRPDNDGFRAKMYDITQHP) the chain is on the cytoplasmic side. Residues 1211–1227 (FFKRTIALLVLAQSVLL) traverse the membrane as a helical segment. The Extracellular segment spans residues 1228–1236 (SVKWDVDDP). A helical transmembrane segment spans residues 1237–1260 (VTVPLATMSVVFTFIFVLEVTMKI). Residues 1261-1271 (IAMSPAGFWQS) lie on the Cytoplasmic side of the membrane. Residues 1272 to 1293 (RRNRYDLLVTSLGVVWVVLHFA) traverse the membrane as a helical segment. Topologically, residues 1294 to 1296 (LLN) are extracellular. A helical; Voltage-sensor transmembrane segment spans residues 1297 to 1318 (AYTYMMGACVIVFRFFSICGKH). At 1319–1331 (VTLKMLLLTVVVS) the chain is on the cytoplasmic side. Residues 1332–1357 (MYKSFFIIVGMFLLLLCYAFAGVVLF) form a helical membrane-spanning segment. At 1358–1378 (GTVKYGENINRHANFSSAGKA) the chain is on the extracellular side. Residues 1379-1398 (ITVLFRIVTGEDWNKIMHDC) constitute an intramembrane region (pore-forming). Topologically, residues 1399–1420 (MVQPPFCTPDEFTYWATDCGNY) are extracellular. A disulfide bond links Cys1405 and Cys1417. A helical membrane pass occupies residues 1421 to 1447 (AGALMYFCSFYVIIAYIMLNLLVAIIV). Over 1448 to 1738 (ENFSLFYSTE…DESGDDLLDI (291 aa)) the chain is Cytoplasmic. Positions 1602-1679 (EQERSRFLNP…WRLPSAPKPI (78 aa)) are disordered. Residues 1613 to 1631 (SIETTQPSEDSNANSQDHS) are compositionally biased toward polar residues. Positions 1633–1648 (QPETSSQQQLLSPTLS) are enriched in low complexity.

This sequence belongs to the NALCN family. Found in a complex with NALCN, UNC79, UNC80 and NACL1; these auxiliary subunits are indispensable for the function of the NALCN channel. Interacts with UNC80; required for the NALCN activation/inhibition by GPCRs in neurons. Found in a complex with NALCN, UNC79 and UNC80; UNC80 bridges NALCN to UNC79. Interacts with CHRM3. Phosphorylated on tyrosine residues. In terms of tissue distribution, widely expressed in the brain and spinal cord neurons. Expressed also in pancreatic islet cells.

Its subcellular location is the cell membrane. It catalyses the reaction Na(+)(in) = Na(+)(out). With respect to regulation, inhibited by low micromolar concentrations of Gd(3+) and high micromolar concentrations of verapamil. Insensitive to tetrodotoxin (TTX) and potentiated by low external Ca(2+) concentration. In terms of biological role, voltage-gated ion channel responsible for the resting Na(+) permeability that controls neuronal excitability. NALCN channel functions as a multi-protein complex, which consists at least of NALCN, NALF1, UNC79 and UNC80. NALCN is the voltage-sensing, pore-forming subunit of the NALCN channel complex. NALCN channel complex is constitutively active and conducts monovalent cations but is blocked by physiological concentrations of extracellular divalent cations. In addition to its role in regulating neuronal excitability, is required for normal respiratory rhythm, systemic osmoregulation by controlling the serum sodium concentration and in the regulation of the intestinal pace-making activity in the interstitial cells of Cajal. Plays a critical role in both maintenance of spontaneous firing of substantia nigra pars reticulata (SNr) neurons and physiological modulation of SNr neuron excitability. NALCN channel is also activated by neuropeptides such as neurotensin and substance P (SP) through a SRC family kinases-dependent pathway. In addition, NALCN activity is enhanced/modulated by several GPCRs, such as CHRM3. The polypeptide is Sodium leak channel NALCN (Nalcn) (Mus musculus (Mouse)).